Here is a 589-residue protein sequence, read N- to C-terminus: V-type ATP synthase alpha chain (589 aa).

Residue 232–239 (GPFGSGKT) coordinates ATP.

It belongs to the ATPase alpha/beta chains family.

It catalyses the reaction ATP + H2O + 4 H(+)(in) = ADP + phosphate + 5 H(+)(out). In terms of biological role, produces ATP from ADP in the presence of a proton gradient across the membrane. The V-type alpha chain is a catalytic subunit. This chain is V-type ATP synthase alpha chain, found in Acetivibrio thermocellus (strain ATCC 27405 / DSM 1237 / JCM 9322 / NBRC 103400 / NCIMB 10682 / NRRL B-4536 / VPI 7372) (Clostridium thermocellum).